The primary structure comprises 377 residues: Putative glutamate--cysteine ligase 2 (377 aa).

The protein belongs to the glutamate--cysteine ligase type 2 family. YbdK subfamily.

It carries out the reaction L-cysteine + L-glutamate + ATP = gamma-L-glutamyl-L-cysteine + ADP + phosphate + H(+). ATP-dependent carboxylate-amine ligase which exhibits weak glutamate--cysteine ligase activity. This Pseudomonas aeruginosa (strain ATCC 15692 / DSM 22644 / CIP 104116 / JCM 14847 / LMG 12228 / 1C / PRS 101 / PAO1) protein is Putative glutamate--cysteine ligase 2.